Here is a 189-residue protein sequence, read N- to C-terminus: Interferon alpha-13 (189 aa).

The first 23 residues, Met-1 to Gly-23, serve as a signal peptide directing secretion. 2 cysteine pairs are disulfide-bonded: Cys-24–Cys-122 and Cys-52–Cys-162. N-linked (GlcNAc...) asparagine glycans are attached at residues Asn-94 and Asn-101.

It belongs to the alpha/beta interferon family.

It localises to the secreted. Functionally, exhibits antiviral activity against Theiler's virus, Mengo virus and vesicular stomatitis virus. Interferons alpha stimulate the production of two enzymes: a protein kinase and an oligoadenylate synthetase. The sequence is that of Interferon alpha-13 (Ifna13) from Mus musculus (Mouse).